Here is a 248-residue protein sequence, read N- to C-terminus: Pyridoxine 5'-phosphate synthase (248 aa).

Residue asparagine 12 coordinates 3-amino-2-oxopropyl phosphate. Residue 14–15 coordinates 1-deoxy-D-xylulose 5-phosphate; that stretch reads DH. Arginine 23 contributes to the 3-amino-2-oxopropyl phosphate binding site. Histidine 48 acts as the Proton acceptor in catalysis. 1-deoxy-D-xylulose 5-phosphate-binding residues include arginine 50 and histidine 55. Glutamate 75 functions as the Proton acceptor in the catalytic mechanism. Threonine 105 is a 1-deoxy-D-xylulose 5-phosphate binding site. Histidine 196 acts as the Proton donor in catalysis. Residues glycine 197 and 218–219 each bind 3-amino-2-oxopropyl phosphate; that span reads GH.

It belongs to the PNP synthase family. In terms of assembly, homooctamer; tetramer of dimers.

The protein resides in the cytoplasm. It carries out the reaction 3-amino-2-oxopropyl phosphate + 1-deoxy-D-xylulose 5-phosphate = pyridoxine 5'-phosphate + phosphate + 2 H2O + H(+). It functions in the pathway cofactor biosynthesis; pyridoxine 5'-phosphate biosynthesis; pyridoxine 5'-phosphate from D-erythrose 4-phosphate: step 5/5. Its function is as follows. Catalyzes the complicated ring closure reaction between the two acyclic compounds 1-deoxy-D-xylulose-5-phosphate (DXP) and 3-amino-2-oxopropyl phosphate (1-amino-acetone-3-phosphate or AAP) to form pyridoxine 5'-phosphate (PNP) and inorganic phosphate. In Ectopseudomonas mendocina (strain ymp) (Pseudomonas mendocina), this protein is Pyridoxine 5'-phosphate synthase.